Here is a 107-residue protein sequence, read N- to C-terminus: RNA silencing suppressor (107 aa).

Residues 46-49 form a basic region; that stretch reads RRRR. A C4-type zinc finger spans residues 56–78; sequence CHRCYRVYPPLFPEISRCDNRTC.

The protein belongs to the carlaviruses nucleic acid-binding protein family.

In terms of biological role, suppressor of viral-induced RNA silencing. The potential mechanism of action is based on sequestering siRNAs. In Chrysanthemum morifolium (Florist's daisy), this protein is RNA silencing suppressor.